The following is a 74-amino-acid chain: Large ribosomal subunit protein bL31 (74 aa).

Belongs to the bacterial ribosomal protein bL31 family. Type A subfamily. As to quaternary structure, part of the 50S ribosomal subunit.

Its function is as follows. Binds the 23S rRNA. The protein is Large ribosomal subunit protein bL31 of Phenylobacterium zucineum (strain HLK1).